Consider the following 709-residue polypeptide: Coiled-coil domain-containing protein 13 (709 aa).

Coiled-coil stretches lie at residues 70–97 (IFEKRVLEDEIQHLRSELRETVDENGRL), 139–178 (ELSKKNRGLMAESESAKVRIKQLTNRIQELEHQLQMASAK), and 206–288 (EVKA…QRQN). Ser-258 carries the phosphoserine modification. The tract at residues 281–312 (KQLGQRQNKPAGSSSSEVPLSSDSRKMTAQEK) is disordered. Low complexity predominate over residues 293–302 (SSSSEVPLSS). A coiled-coil region spans residues 323–457 (DKQESWEKLA…ELEIGQLSVQ (135 aa)). Disordered stretches follow at residues 462-499 (KGGGEGASPADARFPEDQTPITNSPASAGDHVGRLGSS), 512-542 (SALTRPSLPSPHGTSPRFSDSPEQKGWQAQA), and 600-641 (KMRL…SSTQ). Residues Ser-469 and Ser-532 each carry the phosphoserine modification. The stretch at 539 to 604 (QAQAAEMKAL…EQHLEKMRLE (66 aa)) forms a coiled coil.

Interacts with PCM1, CEP290 and PCNT.

It localises to the cytoplasm. Its subcellular location is the cytoskeleton. The protein resides in the microtubule organizing center. The protein localises to the centrosome. It is found in the centriolar satellite. It localises to the cilium basal body. Its function is as follows. Required for primary cilia formation and promotes the localization of the ciliopathy protein BBS4 to both centriolar satellites and cilia. In Mus musculus (Mouse), this protein is Coiled-coil domain-containing protein 13.